A 239-amino-acid chain; its full sequence is 1-(5-phosphoribosyl)-5-[(5-phosphoribosylamino)methylideneamino] imidazole-4-carboxamide isomerase (239 aa).

The active-site Proton acceptor is the D8. D129 serves as the catalytic Proton donor.

It belongs to the HisA/HisF family.

The protein localises to the cytoplasm. It catalyses the reaction 1-(5-phospho-beta-D-ribosyl)-5-[(5-phospho-beta-D-ribosylamino)methylideneamino]imidazole-4-carboxamide = 5-[(5-phospho-1-deoxy-D-ribulos-1-ylimino)methylamino]-1-(5-phospho-beta-D-ribosyl)imidazole-4-carboxamide. Its pathway is amino-acid biosynthesis; L-histidine biosynthesis; L-histidine from 5-phospho-alpha-D-ribose 1-diphosphate: step 4/9. The sequence is that of 1-(5-phosphoribosyl)-5-[(5-phosphoribosylamino)methylideneamino] imidazole-4-carboxamide isomerase from Bacillus mycoides (strain KBAB4) (Bacillus weihenstephanensis).